The chain runs to 227 residues: RNA pyrophosphohydrolase (227 aa).

The region spanning 6 to 149 (GFRPNVGIIL…KRDVYQMALT (144 aa)) is the Nudix hydrolase domain. Residues 38 to 59 (GGIKYGETPEQAMYRELHEEIG) carry the Nudix box motif. The disordered stretch occupies residues 165 to 227 (PYGTHGAHGA…PVSTTRSTDD (63 aa)). Residues 192-201 (AQAAQQADAD) show a composition bias toward low complexity. Residues 217 to 227 (TPVSTTRSTDD) show a composition bias toward polar residues.

It belongs to the Nudix hydrolase family. RppH subfamily. It depends on a divalent metal cation as a cofactor.

Accelerates the degradation of transcripts by removing pyrophosphate from the 5'-end of triphosphorylated RNA, leading to a more labile monophosphorylated state that can stimulate subsequent ribonuclease cleavage. The sequence is that of RNA pyrophosphohydrolase from Cupriavidus taiwanensis (strain DSM 17343 / BCRC 17206 / CCUG 44338 / CIP 107171 / LMG 19424 / R1) (Ralstonia taiwanensis (strain LMG 19424)).